The chain runs to 371 residues: Transaldolase (371 aa).

The active-site Schiff-base intermediate with substrate is lysine 140.

Belongs to the transaldolase family. Type 2 subfamily.

It is found in the cytoplasm. The catalysed reaction is D-sedoheptulose 7-phosphate + D-glyceraldehyde 3-phosphate = D-erythrose 4-phosphate + beta-D-fructose 6-phosphate. The protein operates within carbohydrate degradation; pentose phosphate pathway; D-glyceraldehyde 3-phosphate and beta-D-fructose 6-phosphate from D-ribose 5-phosphate and D-xylulose 5-phosphate (non-oxidative stage): step 2/3. In terms of biological role, transaldolase is important for the balance of metabolites in the pentose-phosphate pathway. The polypeptide is Transaldolase (Frankia alni (strain DSM 45986 / CECT 9034 / ACN14a)).